The following is a 339-amino-acid chain: Ketol-acid reductoisomerase (NADP(+)) (339 aa).

The KARI N-terminal Rossmann domain occupies 1-182; it reads MRVYYDRDAD…GGGRAGIIET (182 aa). NADP(+) contacts are provided by residues 24–27, Arg48, Ser51, Thr53, and 83–86; these read YGSQ and DELQ. His108 is a catalytic residue. Gly134 serves as a coordination point for NADP(+). Positions 183 to 328 constitute a KARI C-terminal knotted domain; the sequence is TFKEECETDL…AKLRGMMPWI (146 aa). Residues Asp191, Glu195, Glu227, and Glu231 each contribute to the Mg(2+) site. Residue Ser252 participates in substrate binding.

The protein belongs to the ketol-acid reductoisomerase family. The cofactor is Mg(2+).

The catalysed reaction is (2R)-2,3-dihydroxy-3-methylbutanoate + NADP(+) = (2S)-2-acetolactate + NADPH + H(+). The enzyme catalyses (2R,3R)-2,3-dihydroxy-3-methylpentanoate + NADP(+) = (S)-2-ethyl-2-hydroxy-3-oxobutanoate + NADPH + H(+). Its pathway is amino-acid biosynthesis; L-isoleucine biosynthesis; L-isoleucine from 2-oxobutanoate: step 2/4. It participates in amino-acid biosynthesis; L-valine biosynthesis; L-valine from pyruvate: step 2/4. Involved in the biosynthesis of branched-chain amino acids (BCAA). Catalyzes an alkyl-migration followed by a ketol-acid reduction of (S)-2-acetolactate (S2AL) to yield (R)-2,3-dihydroxy-isovalerate. In the isomerase reaction, S2AL is rearranged via a Mg-dependent methyl migration to produce 3-hydroxy-3-methyl-2-ketobutyrate (HMKB). In the reductase reaction, this 2-ketoacid undergoes a metal-dependent reduction by NADPH to yield (R)-2,3-dihydroxy-isovalerate. This chain is Ketol-acid reductoisomerase (NADP(+)), found in Methylobacterium radiotolerans (strain ATCC 27329 / DSM 1819 / JCM 2831 / NBRC 15690 / NCIMB 10815 / 0-1).